Here is a 120-residue protein sequence, read N- to C-terminus: Ribosome-binding factor A (120 aa).

The protein belongs to the RbfA family. As to quaternary structure, monomer. Binds 30S ribosomal subunits, but not 50S ribosomal subunits or 70S ribosomes.

It localises to the cytoplasm. One of several proteins that assist in the late maturation steps of the functional core of the 30S ribosomal subunit. Associates with free 30S ribosomal subunits (but not with 30S subunits that are part of 70S ribosomes or polysomes). Required for efficient processing of 16S rRNA. May interact with the 5'-terminal helix region of 16S rRNA. In Clostridium botulinum (strain 657 / Type Ba4), this protein is Ribosome-binding factor A.